Reading from the N-terminus, the 203-residue chain is Small ribosomal subunit protein uS4 (203 aa).

Residues 20 to 44 (LPGLTRKRPKNTNPPGMHGAERKKK) form a disordered region. An S4 RNA-binding domain is found at 92–155 (MRLDCIVFRL…SSRKLVAAYA (64 aa)).

It belongs to the universal ribosomal protein uS4 family. As to quaternary structure, part of the 30S ribosomal subunit. Contacts protein S5. The interaction surface between S4 and S5 is involved in control of translational fidelity.

Functionally, one of the primary rRNA binding proteins, it binds directly to 16S rRNA where it nucleates assembly of the body of the 30S subunit. In terms of biological role, with S5 and S12 plays an important role in translational accuracy. The chain is Small ribosomal subunit protein uS4 from Synechococcus sp. (strain JA-2-3B'a(2-13)) (Cyanobacteria bacterium Yellowstone B-Prime).